The sequence spans 317 residues: uncharacterized protein (317 aa).

Transmembrane regions (helical) follow at residues 14-34 (IPLLSNDLISMLSGGVAATVS), 72-92 (LIGFFRGNGTNCLRAFPYGAV), 119-139 (LLFGAIAGAASCATTYPLDIA), 196-216 (TLLNVVPYVSICFFTFEFCKQ), 230-250 (LFLGGFTGIIGQTLTFPADVL), and 291-307 (SNMLKIIPVMSITWYTY). Solcar repeat units follow at residues 18–103 (SNDL…LKQR), 113–217 (LENH…CKQK), and 224–313 (LTAF…VSKM).

The protein belongs to the mitochondrial carrier (TC 2.A.29) family.

The protein resides in the mitochondrion inner membrane. This is an uncharacterized protein from Schizosaccharomyces pombe (strain 972 / ATCC 24843) (Fission yeast).